A 285-amino-acid chain; its full sequence is Methylamine utilization protein MauF (285 aa).

Helical transmembrane passes span 39–59, 63–83, 120–140, 144–164, 184–204, 209–229, and 265–285; these read LGGL…LSQT, GVAV…LSTW, AVGA…LGFG, FGAL…QLGF, FPVW…YLTY, ILYL…AILL, and ALLD…FAAL.

The protein resides in the cell membrane. It participates in one-carbon metabolism; methylamine degradation. The chain is Methylamine utilization protein MauF (mauF) from Methylorubrum extorquens (strain ATCC 14718 / DSM 1338 / JCM 2805 / NCIMB 9133 / AM1) (Methylobacterium extorquens).